The sequence spans 40 residues: Photosystem II reaction center protein J (40 aa).

Residues 8–28 (IPLWVVATIAGLGVITVVGIF) traverse the membrane as a helical segment.

It belongs to the PsbJ family. In terms of assembly, PSII is composed of 1 copy each of membrane proteins PsbA, PsbB, PsbC, PsbD, PsbE, PsbF, PsbH, PsbI, PsbJ, PsbK, PsbL, PsbM, PsbT, PsbX, PsbY, PsbZ, Psb30/Ycf12, peripheral proteins PsbO, CyanoQ (PsbQ), PsbU, PsbV and a large number of cofactors. It forms dimeric complexes.

It localises to the cellular thylakoid membrane. Functionally, one of the components of the core complex of photosystem II (PSII). PSII is a light-driven water:plastoquinone oxidoreductase that uses light energy to abstract electrons from H(2)O, generating O(2) and a proton gradient subsequently used for ATP formation. It consists of a core antenna complex that captures photons, and an electron transfer chain that converts photonic excitation into a charge separation. This Nostoc sp. (strain PCC 7120 / SAG 25.82 / UTEX 2576) protein is Photosystem II reaction center protein J.